The sequence spans 639 residues: DNA mismatch repair protein MutL (639 aa).

The tract at residues 336 to 392 (SAHDDPTPAISGAARDEEPRGVENRASAGENRFNRPASSPVASAPRPAHVAAPRMPA) is disordered. A compositionally biased stretch (basic and acidic residues) spans 349–358 (ARDEEPRGVE). The span at 370-392 (RPASSPVASAPRPAHVAAPRMPA) shows a compositional bias: low complexity.

The protein belongs to the DNA mismatch repair MutL/HexB family.

Functionally, this protein is involved in the repair of mismatches in DNA. It is required for dam-dependent methyl-directed DNA mismatch repair. May act as a 'molecular matchmaker', a protein that promotes the formation of a stable complex between two or more DNA-binding proteins in an ATP-dependent manner without itself being part of a final effector complex. In Edwardsiella ictaluri (strain 93-146), this protein is DNA mismatch repair protein MutL.